Reading from the N-terminus, the 672-residue chain is Flap endonuclease 1 (672 aa).

The N-domain stretch occupies residues 1 to 106 (MGIKGLTKFI…SELEKRGEKR (106 aa)). D34 serves as a coordination point for Mg(2+). DNA-binding residues include R47 and R72. Mg(2+) contacts are provided by D88, E160, E162, D181, and D183. Residues 124–266 (EIKKQSGRTV…KTAYNLIKEY (143 aa)) are I-domain. E160 provides a ligand contact to DNA. DNA contacts are provided by G244 and D246. D246 contributes to the Mg(2+) binding site. Residues 349–357 (TQRRLDNFF) form an interaction with PCNA region. The tract at residues 371–610 (ETKKEQTLPA…EDSPNSYNNI (240 aa)) is disordered. Composition is skewed to basic and acidic residues over residues 413-493 (MKEE…KKSL), 502-526 (DSDK…EKIN), and 535-548 (DHSR…KDNI). Low complexity predominate over residues 549 to 584 (SDINNNNNNNNSSSNNNNISNNHFNSVSSNSTFNSS). Residues 587 to 603 (LKSEDTLKSNSPLKEDS) are compositionally biased toward basic and acidic residues.

Belongs to the XPG/RAD2 endonuclease family. FEN1 subfamily. In terms of assembly, interacts with PCNA1 and PCNA2. Three molecules of FEN1 bind to one PCNA trimer with each molecule binding to one PCNA monomer. PCNA stimulates the nuclease activity without altering cleavage specificity. Mg(2+) serves as cofactor. Phosphorylated. Phosphorylation upon DNA damage induces relocalization to the nuclear plasma.

Its subcellular location is the nucleus. It localises to the nucleolus. It is found in the nucleoplasm. The protein resides in the mitochondrion. Its function is as follows. Structure-specific nuclease with 5'-flap endonuclease and 5'-3' exonuclease activities involved in DNA replication and repair. During DNA replication, cleaves the 5'-overhanging flap structure that is generated by displacement synthesis when DNA polymerase encounters the 5'-end of a downstream Okazaki fragment. It enters the flap from the 5'-end and then tracks to cleave the flap base, leaving a nick for ligation. Also involved in the long patch base excision repair (LP-BER) pathway, by cleaving within the apurinic/apyrimidinic (AP) site-terminated flap. Acts as a genome stabilization factor that prevents flaps from equilibrating into structures that lead to duplications and deletions. Also possesses 5'-3' exonuclease activity on nicked or gapped double-stranded DNA, and exhibits RNase H activity. Also involved in replication and repair of rDNA and in repairing mitochondrial DNA. The sequence is that of Flap endonuclease 1 from Plasmodium falciparum (isolate 3D7).